We begin with the raw amino-acid sequence, 370 residues long: Protein FAM110B (370 aa).

Disordered regions lie at residues 127–151 (SSEG…RSEA) and 237–256 (KSPE…RPSL). Phosphoserine is present on residues Ser238 and Ser301. Positions 317–337 (DCEQSQDSNSDLRNDDSANDR) are disordered. Residues 326-335 (SDLRNDDSAN) show a composition bias toward basic and acidic residues.

This sequence belongs to the FAM110 family.

Its subcellular location is the cytoplasm. The protein resides in the cytoskeleton. The protein localises to the microtubule organizing center. It localises to the centrosome. The chain is Protein FAM110B (FAM110B) from Pongo abelii (Sumatran orangutan).